We begin with the raw amino-acid sequence, 351 residues long: D-alanine--D-alanine ligase (351 aa).

One can recognise an ATP-grasp domain in the interval Lys146–Leu340. Ala173–Ser226 contributes to the ATP binding site. Asp295, Glu307, and Asn309 together coordinate Mg(2+).

Belongs to the D-alanine--D-alanine ligase family. Mg(2+) serves as cofactor. The cofactor is Mn(2+).

Its subcellular location is the cytoplasm. It carries out the reaction 2 D-alanine + ATP = D-alanyl-D-alanine + ADP + phosphate + H(+). Its pathway is cell wall biogenesis; peptidoglycan biosynthesis. Functionally, cell wall formation. This is D-alanine--D-alanine ligase from Pediococcus pentosaceus (strain ATCC 25745 / CCUG 21536 / LMG 10740 / 183-1w).